An 83-amino-acid chain; its full sequence is Type 3 secretion system needle filament protein (83 aa).

Belongs to the SctF family. In terms of assembly, the core secretion machinery of the T3SS is composed of approximately 20 different proteins, including cytoplasmic components, a base, an export apparatus and a needle. This subunit polymerizes and forms the helical needle filament. Interacts with the needle tip protein IpaD/SctA. Interacts with the export apparatus components SpaP/SctR, SpaQ/SctS and SpaR/SctT.

Its subcellular location is the secreted. It is found in the cell surface. In terms of biological role, component of the type III secretion system (T3SS), also called injectisome, which is used to inject bacterial effector proteins into eukaryotic host cells. MxiH/SctF forms the external needle filament that protrudes from the bacterial surface. Its function is as follows. During infection, can induce innate immune responses. The needle proteins interact with host TLR2 or TLR4, and induce signaling by NF-kappa-B and/or AP-1. This activation is MyD88 dependent and results in increased expression of cytokines, including TNF-alpha, IL-6 and IL-8. This chain is Type 3 secretion system needle filament protein, found in Shigella flexneri.